Reading from the N-terminus, the 73-residue chain is Large ribosomal subunit protein bL27c (73 aa).

This sequence belongs to the bacterial ribosomal protein bL27 family.

Its subcellular location is the plastid. It localises to the chloroplast. In Chrysochromulina alifera (Plankton alga), this protein is Large ribosomal subunit protein bL27c (rpl27).